A 125-amino-acid polypeptide reads, in one-letter code: Fluoride-specific ion channel FluC (125 aa).

A run of 4 helical transmembrane segments spans residues 5 to 25 (FVFI…LAGF), 33 to 53 (FFPF…GFLW), 69 to 89 (FVLV…LETG), and 101 to 121 (IVNL…GIVL). Residues Gly76 and Thr79 each coordinate Na(+).

Belongs to the fluoride channel Fluc/FEX (TC 1.A.43) family.

It is found in the cell inner membrane. It catalyses the reaction fluoride(in) = fluoride(out). With respect to regulation, na(+) is not transported, but it plays an essential structural role and its presence is essential for fluoride channel function. In terms of biological role, fluoride-specific ion channel. Important for reducing fluoride concentration in the cell, thus reducing its toxicity. This is Fluoride-specific ion channel FluC from Desulforapulum autotrophicum (strain ATCC 43914 / DSM 3382 / VKM B-1955 / HRM2) (Desulfobacterium autotrophicum).